We begin with the raw amino-acid sequence, 388 residues long: Endoglucanase 3 (388 aa).

The N-terminal stretch at M1–A16 is a signal peptide. Positions Q17–Q52 constitute a CBM1 domain. Intrachain disulfides connect C24-C41 and C35-C51. A linker region spans residues P53 to I91. The segment at T56–P81 is disordered. N92 and N155 each carry an N-linked (GlcNAc...) asparagine glycan. Residues N92 to P388 are catalytic. E215 functions as the Proton donor in the catalytic mechanism. The N-linked (GlcNAc...) asparagine glycan is linked to N259. E322 acts as the Nucleophile in catalysis.

It belongs to the glycosyl hydrolase 5 (cellulase A) family.

It catalyses the reaction Endohydrolysis of (1-&gt;4)-beta-D-glucosidic linkages in cellulose, lichenin and cereal beta-D-glucans.. The sequence is that of Endoglucanase 3 (CMC3) from Humicola insolens (Soft-rot fungus).